Reading from the N-terminus, the 997-residue chain is Glutamate [NMDA] receptor subunit 1 (997 aa).

A signal peptide spans 1 to 26 (MAVAGFVFCWPLLGLTIVLLVAPIDA). Residues 27 to 573 (AQRHTASDNP…TLVSFLQPFS (547 aa)) lie on the Extracellular side of the membrane. Asn258, Asn314, Asn345, Asn397, Asn454, Asn481, and Asn501 each carry an N-linked (GlcNAc...) asparagine glycan. Glycine-binding positions include 530-532 (PLT) and Arg537. Residues 574–594 (NTLWILVMVSVHVVALVLYLL) form a helical membrane-spanning segment. Residues 595-651 (DRFSPFGRFKLSHSDSNEEKALNLSSAVWFAWGVLLNSGIGEGTPRSFSARVLGMVW) lie on the Cytoplasmic side of the membrane. A helical transmembrane segment spans residues 652-672 (AGFAMIIVASYTANLAAFLVL). The Extracellular portion of the chain corresponds to 673–831 (ERPKTKLSGI…KTPNTLGLKN (159 aa)). Asn693 carries an N-linked (GlcNAc...) asparagine glycan. Residues Ser703 and Asp747 each contribute to the glycine site. Residues 832–852 (MAGVFILVGVGIAGGVGLIII) form a helical membrane-spanning segment. Topologically, residues 853 to 997 (EVIYKKHQVK…YTSDVSHLVV (145 aa)) are cytoplasmic. The segment at 970–997 (LGKTRPQQSVLPPRYSPGYTSDVSHLVV) is disordered. Residues 987–997 (GYTSDVSHLVV) show a composition bias toward polar residues.

The protein belongs to the glutamate-gated ion channel (TC 1.A.10.1) family. Forms a heteromeric NMDA channel with Nmdar2.

The protein localises to the cell membrane. It localises to the postsynaptic cell membrane. The protein resides in the postsynaptic density. Its function is as follows. NMDA receptor subtype of glutamate-gated ion channels with high calcium permeability and voltage-dependent sensitivity to magnesium. Mediated by glycine. This protein plays a key role in synaptic plasticity, synaptogenesis, excitotoxicity, memory acquisition and learning. It mediates neuronal functions in glutamate neurotransmission. Is involved in the cell surface targeting of NMDA receptors. Plays a role in associative learning and in long-term memory consolidation. This chain is Glutamate [NMDA] receptor subunit 1, found in Drosophila yakuba (Fruit fly).